The primary structure comprises 338 residues: Heat-inducible transcription repressor HrcA (338 aa).

Belongs to the HrcA family.

Negative regulator of class I heat shock genes (grpE-dnaK-dnaJ and groELS operons). Prevents heat-shock induction of these operons. In Bacillus cereus (strain 03BB102), this protein is Heat-inducible transcription repressor HrcA.